Consider the following 264-residue polypeptide: Zinc finger protein CG30 (264 aa).

An RING-type zinc finger spans residues 8-63 (CNICFSVAEIKNYFLQPIDRLTIIPVLELDTCKHQLCSMCIRKIRKRKKVPCPLCR).

The protein resides in the host nucleus. Its function is as follows. Plays a role in the proper expression of late and very late genes. The polypeptide is Zinc finger protein CG30 (CG30) (Autographa californica nuclear polyhedrosis virus (AcMNPV)).